A 295-amino-acid polypeptide reads, in one-letter code: 2-methylisocitrate lyase (295 aa).

Residue 45 to 47 (SGG) coordinates substrate. Mg(2+) is bound by residues aspartate 85 and aspartate 87. Residues 123-124 (CG), arginine 158, glutamate 188, 210-212 (NIT), arginine 241, and arginine 270 contribute to the substrate site.

It belongs to the isocitrate lyase/PEP mutase superfamily. Methylisocitrate lyase family. As to quaternary structure, homotetramer; dimer of dimers. Mg(2+) serves as cofactor.

The catalysed reaction is (2S,3R)-3-hydroxybutane-1,2,3-tricarboxylate = pyruvate + succinate. It participates in organic acid metabolism; propanoate degradation. Involved in the catabolism of short chain fatty acids (SCFA) via the 2-methylcitrate cycle I (propionate degradation route). Catalyzes the thermodynamically favored C-C bond cleavage of (2R,3S)-2-methylisocitrate to yield pyruvate and succinate via an alpha-carboxy-carbanion intermediate. This is 2-methylisocitrate lyase from Salmonella typhimurium (strain LT2 / SGSC1412 / ATCC 700720).